Reading from the N-terminus, the 262-residue chain is Pyridoxine 5'-phosphate synthase (262 aa).

Asparagine 6 contacts 3-amino-2-oxopropyl phosphate. 8-9 (DH) provides a ligand contact to 1-deoxy-D-xylulose 5-phosphate. Arginine 17 contacts 3-amino-2-oxopropyl phosphate. The active-site Proton acceptor is the histidine 43. 2 residues coordinate 1-deoxy-D-xylulose 5-phosphate: arginine 45 and histidine 50. The active-site Proton acceptor is glutamate 70. Threonine 102 is a binding site for 1-deoxy-D-xylulose 5-phosphate. Histidine 215 serves as the catalytic Proton donor. Residues glycine 216 and 237–238 (GH) each bind 3-amino-2-oxopropyl phosphate.

It belongs to the PNP synthase family. As to quaternary structure, homooctamer; tetramer of dimers.

The protein localises to the cytoplasm. The catalysed reaction is 3-amino-2-oxopropyl phosphate + 1-deoxy-D-xylulose 5-phosphate = pyridoxine 5'-phosphate + phosphate + 2 H2O + H(+). It functions in the pathway cofactor biosynthesis; pyridoxine 5'-phosphate biosynthesis; pyridoxine 5'-phosphate from D-erythrose 4-phosphate: step 5/5. Its function is as follows. Catalyzes the complicated ring closure reaction between the two acyclic compounds 1-deoxy-D-xylulose-5-phosphate (DXP) and 3-amino-2-oxopropyl phosphate (1-amino-acetone-3-phosphate or AAP) to form pyridoxine 5'-phosphate (PNP) and inorganic phosphate. The polypeptide is Pyridoxine 5'-phosphate synthase (Helicobacter acinonychis (strain Sheeba)).